The primary structure comprises 121 residues: Ribonuclease P protein component (121 aa).

This sequence belongs to the RnpA family. As to quaternary structure, consists of a catalytic RNA component (M1 or rnpB) and a protein subunit.

It catalyses the reaction Endonucleolytic cleavage of RNA, removing 5'-extranucleotides from tRNA precursor.. RNaseP catalyzes the removal of the 5'-leader sequence from pre-tRNA to produce the mature 5'-terminus. It can also cleave other RNA substrates such as 4.5S RNA. The protein component plays an auxiliary but essential role in vivo by binding to the 5'-leader sequence and broadening the substrate specificity of the ribozyme. The chain is Ribonuclease P protein component from Nitrosomonas eutropha (strain DSM 101675 / C91 / Nm57).